We begin with the raw amino-acid sequence, 259 residues long: uncharacterized protein (259 aa).

Residues 82–128 are a coiled coil; it reads NSGMAETIEEKREDFQKEEKEDFTEEQNIEDLLAAVADAEGRYQTNQ. The interval 192–259 is disordered; sequence LIQTQNQHPR…SSSRNSSTTS (68 aa). The segment covering 228 to 240 has biased composition (basic residues); sequence KKVHARSRKRRKT. Residues 241–259 show a composition bias toward low complexity; sequence SSSSSSSSSSSSRNSSTTS.

This is an uncharacterized protein from Homo sapiens (Human).